A 326-amino-acid chain; its full sequence is GTPase IMAP family member 5 (326 aa).

Residues 1 to 297 (MEDHGFEELS…MLCRVTSCLD (297 aa)) lie on the Cytoplasmic side of the membrane. The AIG1-type G domain occupies 42–245 (SGLLRILLVG…HSNDLFVYTQ (204 aa)). GTP contacts are provided by residues 51–59 (GKSGCGKSA), S72, 169–171 (HKE), and N206. Residues 298–318 (WHIAVSVLLIVLGLTLLITLI) traverse the membrane as a helical; Anchor for type IV membrane protein segment. The Lumenal segment spans residues 319-326 (NMYIGRWK).

The protein belongs to the TRAFAC class TrmE-Era-EngA-EngB-Septin-like GTPase superfamily. AIG1/Toc34/Toc159-like paraseptin GTPase family. IAN subfamily. In terms of assembly, interacts with BAD, BAK1, BAX, BCL2, BCL2L1/Bcl-xL and BCL2L11/BimEL. The interaction with BAX is increased, when cells initiate apoptosis upon IL2 withdrawal. Forms a complex with BCL2L1 or MCL1 and HSPA8/HSC70; the interaction between HSPA8 and BCL2L1 or MCL1 is impaired in the absence of GIMAP5. May interact (via N-terminus) with microtubules. Primarily expressed in spleen, heart, lung and intestine and, at lower levels, in kidney, stomach and muscle. Expressed in thymus and lymph nodes (at protein level). In the spleen, expressed in periarteriolar lymphatic sheets. Isoform 2: Expressed at higher levels in T lymphocytes compared to isoform 1.

Its subcellular location is the lysosome membrane. It localises to the endosome. The protein localises to the multivesicular body membrane. It is found in the endosome membrane. Required for mitochondrial integrity and T-cell survival. May contribute to T-cell quiescence. Its function is as follows. Plays a role in T lymphocyte development and the optimal generation of CD4/CD8 double-positive thymocytes. Inhibitor of GSK3A, possibly by sequestering GSK3A in cytoplasmic vesicles and impairing its translocation to the nucleus. Consequently, impairs GSK3A-dependent transcriptional program and regulation of the DNA damage response occurring during T cells proliferation. Required for the survival of peripheral T cells, natural killer (NK) and NK T-cell development and the maintenance of normal liver function. Promotes the survival of quiescent T-cells. May regulate Ca(2+) homeostasis by modulating lysosomal Ca(2+) stores, preventing its accumulation in the absence of T cell activation. May play a role in mitochondrial DNA segregation in hematopoietic tissues. Is a regulator of liver endothelial cell homeostasis. The polypeptide is GTPase IMAP family member 5 (Gimap5) (Rattus norvegicus (Rat)).